A 316-amino-acid polypeptide reads, in one-letter code: Transaldolase (316 aa).

Catalysis depends on lysine 132, which acts as the Schiff-base intermediate with substrate.

Belongs to the transaldolase family. Type 1 subfamily. Homodimer.

It localises to the cytoplasm. The enzyme catalyses D-sedoheptulose 7-phosphate + D-glyceraldehyde 3-phosphate = D-erythrose 4-phosphate + beta-D-fructose 6-phosphate. It functions in the pathway carbohydrate degradation; pentose phosphate pathway; D-glyceraldehyde 3-phosphate and beta-D-fructose 6-phosphate from D-ribose 5-phosphate and D-xylulose 5-phosphate (non-oxidative stage): step 2/3. In terms of biological role, transaldolase is important for the balance of metabolites in the pentose-phosphate pathway. In Vibrio vulnificus (strain YJ016), this protein is Transaldolase.